A 145-amino-acid chain; its full sequence is MKINIISVGTLSKEFQVIFDDYIKKINFYSNVNLIKIKEFKSNNKDLIIKNETMAILEKIPKNSKVFLCSLNAEQYSSEKFALFLQEDNISFVIGGSHGVDEKMFKGAWKINFSKMTFPHQLFHLMLIEQIYRGFSILNNKIYHK.

S-adenosyl-L-methionine-binding positions include L68, G95, and 113 to 118; that span reads FSKMTF.

Belongs to the RNA methyltransferase RlmH family. In terms of assembly, homodimer.

It is found in the cytoplasm. It catalyses the reaction pseudouridine(1915) in 23S rRNA + S-adenosyl-L-methionine = N(3)-methylpseudouridine(1915) in 23S rRNA + S-adenosyl-L-homocysteine + H(+). In terms of biological role, specifically methylates the pseudouridine at position 1915 (m3Psi1915) in 23S rRNA. The protein is Ribosomal RNA large subunit methyltransferase H of Mycoplasmopsis pulmonis (strain UAB CTIP) (Mycoplasma pulmonis).